Here is a 364-residue protein sequence, read N- to C-terminus: Aminomethyltransferase (364 aa).

Belongs to the GcvT family. The glycine cleavage system is composed of four proteins: P, T, L and H.

It carries out the reaction N(6)-[(R)-S(8)-aminomethyldihydrolipoyl]-L-lysyl-[protein] + (6S)-5,6,7,8-tetrahydrofolate = N(6)-[(R)-dihydrolipoyl]-L-lysyl-[protein] + (6R)-5,10-methylene-5,6,7,8-tetrahydrofolate + NH4(+). In terms of biological role, the glycine cleavage system catalyzes the degradation of glycine. The polypeptide is Aminomethyltransferase (Thermotoga petrophila (strain ATCC BAA-488 / DSM 13995 / JCM 10881 / RKU-1)).